The primary structure comprises 109 residues: Cell division protein ZapA (109 aa).

Residues 21–99 (PEQQEALNQA…IEQALLEQGK (79 aa)) adopt a coiled-coil conformation.

This sequence belongs to the ZapA family. Type 1 subfamily. As to quaternary structure, homodimer. Interacts with FtsZ.

It is found in the cytoplasm. Its function is as follows. Activator of cell division through the inhibition of FtsZ GTPase activity, therefore promoting FtsZ assembly into bundles of protofilaments necessary for the formation of the division Z ring. It is recruited early at mid-cell but it is not essential for cell division. This Pectobacterium atrosepticum (strain SCRI 1043 / ATCC BAA-672) (Erwinia carotovora subsp. atroseptica) protein is Cell division protein ZapA.